The chain runs to 516 residues: 2-isopropylmalate synthase (516 aa).

Positions 5-267 (IIIFDTTLRD…STDINIKEIH (263 aa)) constitute a Pyruvate carboxyltransferase domain. Mn(2+) is bound by residues Asp-14, His-202, His-204, and Asn-238. The regulatory domain stretch occupies residues 393–516 (KLEYFDVQSK…VNKELERLQK (124 aa)).

Belongs to the alpha-IPM synthase/homocitrate synthase family. LeuA type 1 subfamily. As to quaternary structure, homodimer. Requires Mn(2+) as cofactor.

Its subcellular location is the cytoplasm. The catalysed reaction is 3-methyl-2-oxobutanoate + acetyl-CoA + H2O = (2S)-2-isopropylmalate + CoA + H(+). Its pathway is amino-acid biosynthesis; L-leucine biosynthesis; L-leucine from 3-methyl-2-oxobutanoate: step 1/4. Functionally, catalyzes the condensation of the acetyl group of acetyl-CoA with 3-methyl-2-oxobutanoate (2-ketoisovalerate) to form 3-carboxy-3-hydroxy-4-methylpentanoate (2-isopropylmalate). The chain is 2-isopropylmalate synthase from Buchnera aphidicola subsp. Cinara cedri (strain Cc).